The chain runs to 151 residues: Transcription elongation factor Spt5 (151 aa).

The region spanning 98–128 (PGQVVEIVAGAFKGMKARVIDVNQSKGQVTV) is the KOW domain.

This sequence belongs to the archaeal Spt5 family. Heterodimer composed of Spt4 and Spt5. Interacts with RNA polymerase (RNAP).

In terms of biological role, stimulates transcription elongation. This is Transcription elongation factor Spt5 from Aeropyrum pernix (strain ATCC 700893 / DSM 11879 / JCM 9820 / NBRC 100138 / K1).